The primary structure comprises 406 residues: Plasma serine protease inhibitor (406 aa).

An N-terminal signal peptide occupies residues 1 to 19 (MQLFLLLCLVLLSPQGASL). The propeptide at 20-25 (HRHHPR) is removed in mature form. O-linked (GalNAc...) threonine glycosylation occurs at T39. N-linked (GlcNAc...) asparagine glycosylation is found at N249, N262, and N338.

This sequence belongs to the serpin family. As to quaternary structure, forms protease inhibiting heterodimers in extracellular body fluids with serine proteases such as activated protein C/coagulation factor V/F5, acrosin/ACR, chymotrypsinogen B/CTRB1, prothrombin/F2, factor Xa/F10, factor XI/F11, kallikrein/KLKB1, tissue kallikrein, trypsin/PRSS1, prostate specific antigen/KLK3, tissue plasminogen activator/PLAT and urinary plasminogen activator/PLAU. Forms membrane-anchored serine proteases inhibiting heterodimers with TMPRSS7 and TMPRSS11E. Interacts with SEMG2. Post-translationally, N- and O-glycosylated. N-glycosylation consists of a mixture of sialylated bi- (including sialyl-Lewis X epitopes), tri- and tetra-antennary complex-type chains; affects the maximal heparin- and thrombomodulin-enhanced rates of thrombin inhibition. O-glycosylated with core 1 or possibly core 8 glycans. Further modified with 2 sialic acid residues. In terms of processing, proteolytically cleaved. Inhibition of proteases is accompanied by formation of a stable enzyme-inhibitor complex and by degradation of the serpin to lower molecular weight derivatives. Proteolytically cleaved at the N-terminus; inhibits slightly the heparin- and thrombomodulin-enhanced rates of thrombin inhibition. Predominantly expressed in the epithelium of seminal vesicles. Expressed in the proximal tubular epithelium of the kidney. Expressed in the superficial and more differentiated epidermal keratinocytes of the skin. Expressed in megakaryocytes and platelets. Expressed poorly in kidney tumor cells compared to non tumor kidney tissues. Expressed in spermatozoa. Present in very high concentration in seminal plasma. Present in high concentration in plasma, synovial and Graaf follicle fluids. Present in low concentration in breast milk and in amniotic fluids. Present in very low concentration in urine, cerebrospinal fluids, saliva and tears (at protein level). Strongly expressed in liver. Expressed in kidney, spleen, pancreas, skeletal muscle, heart, testes, ovary, interstitial Leydig cells, epididymal glands, seminal vesicles and prostate.

Its subcellular location is the secreted. The protein resides in the extracellular space. Its activity is regulated as follows. Its inhibitory activity is greatly enhanced in the presence of glycosaminoglycans, heparin, thrombomodulin and phospholipids vesicles. Functionally, heparin-dependent serine protease inhibitor acting in body fluids and secretions. Inactivates serine proteases by binding irreversibly to their serine activation site. Involved in the regulation of intravascular and extravascular proteolytic activities. Plays hemostatic roles in the blood plasma. Acts as a procoagulant and pro-inflammatory factor by inhibiting the anticoagulant activated protein C factor as well as the generation of activated protein C factor by the thrombin/thrombomodulin complex. Acts as an anticoagulant factor by inhibiting blood coagulation factors like prothrombin, factor XI, factor Xa, plasma kallikrein and fibrinolytic enzymes such as tissue- and urinary-type plasminogen activators. In seminal plasma, inactivates several serine proteases implicated in the reproductive system. Inhibits the serpin acrosin; indirectly protects component of the male genital tract from being degraded by excessive released acrosin. Inhibits tissue- and urinary-type plasminogen activator, prostate-specific antigen and kallikrein activities; has a control on the sperm motility and fertilization. Inhibits the activated protein C-catalyzed degradation of SEMG1 and SEMG2; regulates the degradation of semenogelin during the process of transfer of spermatozoa from the male reproductive tract into the female tract. In urine, inhibits urinary-type plasminogen activator and kallikrein activities. Inactivates membrane-anchored serine proteases activities such as MPRSS7 and TMPRSS11E. Inhibits urinary-type plasminogen activator-dependent tumor cell invasion and metastasis. May also play a non-inhibitory role in seminal plasma and urine as a hydrophobic hormone carrier by its binding to retinoic acid. This Homo sapiens (Human) protein is Plasma serine protease inhibitor (SERPINA5).